Here is a 514-residue protein sequence, read N- to C-terminus: ATP synthase subunit alpha (514 aa).

Residue 170–177 (GDRQIGKT) coordinates ATP.

Belongs to the ATPase alpha/beta chains family. In terms of assembly, F-type ATPases have 2 components, CF(1) - the catalytic core - and CF(0) - the membrane proton channel. CF(1) has five subunits: alpha(3), beta(3), gamma(1), delta(1), epsilon(1). CF(0) has three main subunits: a(1), b(2) and c(9-12). The alpha and beta chains form an alternating ring which encloses part of the gamma chain. CF(1) is attached to CF(0) by a central stalk formed by the gamma and epsilon chains, while a peripheral stalk is formed by the delta and b chains.

The protein localises to the cell inner membrane. It carries out the reaction ATP + H2O + 4 H(+)(in) = ADP + phosphate + 5 H(+)(out). Functionally, produces ATP from ADP in the presence of a proton gradient across the membrane. The alpha chain is a regulatory subunit. The polypeptide is ATP synthase subunit alpha (Pseudomonas putida (strain W619)).